A 588-amino-acid chain; its full sequence is Aspartate--tRNA ligase (588 aa).

Glutamate 171 contributes to the L-aspartate binding site. Positions 195–198 are aspartate; the sequence is QLFK. Arginine 217 provides a ligand contact to L-aspartate. Residues 217 to 219 and glutamine 226 each bind ATP; that span reads RDE. Histidine 447 contacts L-aspartate. Residue glutamate 481 coordinates ATP. Arginine 488 serves as a coordination point for L-aspartate. 533–536 contacts ATP; sequence GLDR.

The protein belongs to the class-II aminoacyl-tRNA synthetase family. Type 1 subfamily. In terms of assembly, homodimer.

The protein localises to the cytoplasm. The catalysed reaction is tRNA(Asp) + L-aspartate + ATP = L-aspartyl-tRNA(Asp) + AMP + diphosphate. In terms of biological role, catalyzes the attachment of L-aspartate to tRNA(Asp) in a two-step reaction: L-aspartate is first activated by ATP to form Asp-AMP and then transferred to the acceptor end of tRNA(Asp). The protein is Aspartate--tRNA ligase of Aeromonas salmonicida (strain A449).